The primary structure comprises 448 residues: Adenylosuccinate synthetase (448 aa).

GTP is bound by residues 22 to 28 and 50 to 52; these read GDEGKGK and GHT. The active-site Proton acceptor is aspartate 23. Mg(2+)-binding residues include aspartate 23 and glycine 50. Residues 23 to 26, 48 to 51, threonine 139, arginine 153, glutamine 234, threonine 249, and arginine 321 each bind IMP; these read DEGK and NAGH. Histidine 51 (proton donor) is an active-site residue. Position 317 to 323 (317 to 323) interacts with substrate; it reads SVTGRPR. GTP-binding positions include arginine 323, 349–351, and 431–433; these read KLD and STG.

This sequence belongs to the adenylosuccinate synthetase family. As to quaternary structure, homodimer. It depends on Mg(2+) as a cofactor.

Its subcellular location is the cytoplasm. The enzyme catalyses IMP + L-aspartate + GTP = N(6)-(1,2-dicarboxyethyl)-AMP + GDP + phosphate + 2 H(+). It participates in purine metabolism; AMP biosynthesis via de novo pathway; AMP from IMP: step 1/2. Functionally, plays an important role in the de novo pathway of purine nucleotide biosynthesis. Catalyzes the first committed step in the biosynthesis of AMP from IMP. This Paraburkholderia xenovorans (strain LB400) protein is Adenylosuccinate synthetase.